The following is a 278-amino-acid chain: Tryptophan synthase alpha chain (278 aa).

Residues glutamate 49 and aspartate 60 each act as proton acceptor in the active site.

This sequence belongs to the TrpA family. In terms of assembly, tetramer of two alpha and two beta chains.

It catalyses the reaction (1S,2R)-1-C-(indol-3-yl)glycerol 3-phosphate + L-serine = D-glyceraldehyde 3-phosphate + L-tryptophan + H2O. Its pathway is amino-acid biosynthesis; L-tryptophan biosynthesis; L-tryptophan from chorismate: step 5/5. In terms of biological role, the alpha subunit is responsible for the aldol cleavage of indoleglycerol phosphate to indole and glyceraldehyde 3-phosphate. This chain is Tryptophan synthase alpha chain, found in Rhodopirellula baltica (strain DSM 10527 / NCIMB 13988 / SH1).